The chain runs to 262 residues: Small ribosomal subunit protein eS4 (262 aa).

Positions 42 to 105 constitute an S4 RNA-binding domain; it reads LPLVVFLRNR…NEHFRLVYDV (64 aa). Positions 178 to 211 constitute a KOW domain; the sequence is GRLVMVTGGRNLGRVGVIVHREKHEGGFDLVHIK.

Belongs to the eukaryotic ribosomal protein eS4 family. In terms of assembly, component of the small ribosomal subunit. Mature ribosomes consist of a small (40S) and a large (60S) subunit. The 40S subunit contains about 32 different proteins and 1 molecule of RNA (18S). The 60S subunit contains 45 different proteins and 3 molecules of RNA (25S, 5.8S and 5S).

It localises to the cytoplasm. Functionally, component of the ribosome, a large ribonucleoprotein complex responsible for the synthesis of proteins in the cell. The small ribosomal subunit (SSU) binds messenger RNAs (mRNAs) and translates the encoded message by selecting cognate aminoacyl-transfer RNA (tRNA) molecules. The large subunit (LSU) contains the ribosomal catalytic site termed the peptidyl transferase center (PTC), which catalyzes the formation of peptide bonds, thereby polymerizing the amino acids delivered by tRNAs into a polypeptide chain. The nascent polypeptides leave the ribosome through a tunnel in the LSU and interact with protein factors that function in enzymatic processing, targeting, and the membrane insertion of nascent chains at the exit of the ribosomal tunnel. In Candida albicans (strain SC5314 / ATCC MYA-2876) (Yeast), this protein is Small ribosomal subunit protein eS4 (RPS42).